The chain runs to 352 residues: Holliday junction branch migration complex subunit RuvB (352 aa).

Residues 4–185 (ADRLIAATGP…FGIVQRLEFY (182 aa)) form a large ATPase domain (RuvB-L) region. ATP-binding positions include Ile24, Arg25, Gly66, Lys69, Thr70, Thr71, 132 to 134 (EDF), Arg175, Tyr185, and Arg222. Thr70 contacts Mg(2+). Positions 186–256 (STADLATIVS…IADLALNLLD (71 aa)) are small ATPAse domain (RuvB-S). The tract at residues 259–352 (ERGFDHQDRR…VDEFLDAVDD (94 aa)) is head domain (RuvB-H). DNA-binding residues include Arg295, Arg314, and Arg319.

Belongs to the RuvB family. In terms of assembly, homohexamer. Forms an RuvA(8)-RuvB(12)-Holliday junction (HJ) complex. HJ DNA is sandwiched between 2 RuvA tetramers; dsDNA enters through RuvA and exits via RuvB. An RuvB hexamer assembles on each DNA strand where it exits the tetramer. Each RuvB hexamer is contacted by two RuvA subunits (via domain III) on 2 adjacent RuvB subunits; this complex drives branch migration. In the full resolvosome a probable DNA-RuvA(4)-RuvB(12)-RuvC(2) complex forms which resolves the HJ.

It is found in the cytoplasm. The catalysed reaction is ATP + H2O = ADP + phosphate + H(+). Functionally, the RuvA-RuvB-RuvC complex processes Holliday junction (HJ) DNA during genetic recombination and DNA repair, while the RuvA-RuvB complex plays an important role in the rescue of blocked DNA replication forks via replication fork reversal (RFR). RuvA specifically binds to HJ cruciform DNA, conferring on it an open structure. The RuvB hexamer acts as an ATP-dependent pump, pulling dsDNA into and through the RuvAB complex. RuvB forms 2 homohexamers on either side of HJ DNA bound by 1 or 2 RuvA tetramers; 4 subunits per hexamer contact DNA at a time. Coordinated motions by a converter formed by DNA-disengaged RuvB subunits stimulates ATP hydrolysis and nucleotide exchange. Immobilization of the converter enables RuvB to convert the ATP-contained energy into a lever motion, pulling 2 nucleotides of DNA out of the RuvA tetramer per ATP hydrolyzed, thus driving DNA branch migration. The RuvB motors rotate together with the DNA substrate, which together with the progressing nucleotide cycle form the mechanistic basis for DNA recombination by continuous HJ branch migration. Branch migration allows RuvC to scan DNA until it finds its consensus sequence, where it cleaves and resolves cruciform DNA. The chain is Holliday junction branch migration complex subunit RuvB from Pseudomonas fluorescens (strain ATCC BAA-477 / NRRL B-23932 / Pf-5).